A 1343-amino-acid polypeptide reads, in one-letter code: Protein cordon-bleu (1343 aa).

Disordered regions lie at residues 1–51, 301–479, 522–613, 733–808, 1056–1077, and 1105–1148; these read MNLG…GDCK, KVEL…PAAE, VSVA…NGYE, IDKP…TRVL, EKPTSSERISTLHGGDKTKSLD, and INNF…NVFG. The span at 20–30 shows a compositional bias: pro residues; the sequence is APPPPRPPQPA. The KKRRAP 1 signature appears at 305–310; the sequence is KKRRAP. Over residues 324 to 335 the composition is skewed to polar residues; sequence SQISLGSPSSHN. Positions 338–343 match the KKRRAP 2 motif; that stretch reads KKRKAP. The segment covering 343–354 has biased composition (pro residues); that stretch reads PAPPPTPPPSTP. The segment covering 390–400 has biased composition (basic and acidic residues); that stretch reads DLSHSIEDSEP. A compositionally biased stretch (low complexity) spans 406-422; it reads SSSSGDDAAAVGSSSSS. Over residues 445 to 460 the composition is skewed to basic and acidic residues; it reads PEPKPEYEPELKKEAS. The span at 552–573 shows a compositional bias: polar residues; sequence ERMQSVSPMDIMSLNSDSTLPV. Residues 746–757 are compositionally biased toward basic and acidic residues; the sequence is PSQDAKITDNME. The segment covering 773-789 has biased composition (polar residues); sequence VELTSQKDTVLQKSQSF. Over residues 1105-1122 the composition is skewed to polar residues; the sequence is INNFPDTSSARQTPTDTT. The span at 1128–1137 shows a compositional bias: basic and acidic residues; sequence KKPELHKSEI. WH2 domains are found at residues 1167–1187 and 1207–1227; these read IHSSLMEAIQSGEGIERLRKV and ERSALLSAIRASSTSAKLKKT. The tract at residues 1246 to 1297 is disordered; the sequence is NVHTEVISPRPTSPDFVPPLPPSFSPPPPPPPPLAPAKPPVVLPPGGNPEAA. A compositionally biased stretch (pro residues) spans 1261–1292; the sequence is FVPPLPPSFSPPPPPPPPLAPAKPPVVLPPGG. Positions 1297 to 1317 constitute a WH2 3 domain; the sequence is AREALLEAIRSGSGAQQLRKV.

Interacts with pacsin1.

The protein localises to the cell membrane. It is found in the cytoplasm. Its subcellular location is the cytoskeleton. It localises to the cell projection. The protein resides in the ruffle. The protein localises to the cytosol. Functionally, plays an important role in the reorganization of the actin cytoskeleton. Binds to and sequesters actin monomers (G actin). Nucleates actin polymerization by assembling three actin monomers in cross-filament orientation and thereby promotes growth of actin filaments at the barbed end. Can also mediate actin depolymerization at barbed ends and severing of actin filaments. Promotes formation of cell ruffles. Regulates neuron morphogenesis and increases branching of axons and dendrites. Required for normal embryonic development, including normal development of laterality, normal body size and shape, as well as normal brain, heart and kidney development. Required for normal development of stereocilia and kinocilia in sensory hair cells of neuromasts in the posterior lateral line organ, and thus also for balance keeping and normal swimming behavior. This is Protein cordon-bleu (cobl) from Danio rerio (Zebrafish).